The chain runs to 731 residues: Catalase-peroxidase (731 aa).

A cross-link (tryptophyl-tyrosyl-methioninium (Trp-Tyr) (with M-254)) is located at residues 98–227 (WHAAGTYRTA…LAAIQMGLIY (130 aa)). The active-site Proton acceptor is the His-99. The tryptophyl-tyrosyl-methioninium (Tyr-Met) (with W-98) cross-link spans 227-254 (YVNPEGPQGNPHDDEGMARDMKETFKRM). His-269 contacts heme b.

It belongs to the peroxidase family. Peroxidase/catalase subfamily. In terms of assembly, homodimer or homotetramer. Requires heme b as cofactor. Post-translationally, formation of the three residue Trp-Tyr-Met cross-link is important for the catalase, but not the peroxidase activity of the enzyme.

The catalysed reaction is H2O2 + AH2 = A + 2 H2O. It carries out the reaction 2 H2O2 = O2 + 2 H2O. Its function is as follows. Bifunctional enzyme with both catalase and broad-spectrum peroxidase activity. The chain is Catalase-peroxidase from Sphingopyxis alaskensis (strain DSM 13593 / LMG 18877 / RB2256) (Sphingomonas alaskensis).